The following is a 159-amino-acid chain: Ribosomal RNA large subunit methyltransferase H (159 aa).

S-adenosyl-L-methionine contacts are provided by residues G108 and 127–132; that span reads FSKMTF.

Belongs to the RNA methyltransferase RlmH family. In terms of assembly, homodimer.

It localises to the cytoplasm. The catalysed reaction is pseudouridine(1915) in 23S rRNA + S-adenosyl-L-methionine = N(3)-methylpseudouridine(1915) in 23S rRNA + S-adenosyl-L-homocysteine + H(+). Functionally, specifically methylates the pseudouridine at position 1915 (m3Psi1915) in 23S rRNA. This chain is Ribosomal RNA large subunit methyltransferase H, found in Clostridium perfringens (strain ATCC 13124 / DSM 756 / JCM 1290 / NCIMB 6125 / NCTC 8237 / Type A).